Reading from the N-terminus, the 152-residue chain is Large ribosomal subunit protein bL9 (152 aa).

This sequence belongs to the bacterial ribosomal protein bL9 family.

Functionally, binds to the 23S rRNA. In Chlorobaculum tepidum (strain ATCC 49652 / DSM 12025 / NBRC 103806 / TLS) (Chlorobium tepidum), this protein is Large ribosomal subunit protein bL9.